The chain runs to 331 residues: Hydroxysteroid dehydrogenase-like protein 1 (331 aa).

Positions 2-82 (AAVDRFNLLY…TGSTDGIGKA (81 aa)) are required for mitochondria translocation. Residues 74 to 80 (GSTDGIG) and Asp125 contribute to the NADP(+) site. Ser205 lines the substrate pocket. Tyr218 serves as the catalytic Proton acceptor. Lys222 contributes to the NADP(+) binding site.

This sequence belongs to the short-chain dehydrogenases/reductases (SDR) family. 17-beta-HSD 3 subfamily.

The protein resides in the mitochondrion. In terms of biological role, may catalyze the metabolism of steroid hormones and thus play an important role in sex differentiation, the emergence and maintenance of the secondary sexual characters, and the regulation of endocrine. This is Hydroxysteroid dehydrogenase-like protein 1 (HSDL1) from Gallus gallus (Chicken).